A 280-amino-acid polypeptide reads, in one-letter code: Ribosomal RNA-processing protein 7 homolog A (280 aa).

Positions 59-159 constitute an RRM domain; the sequence is RTLFVLNVPP…TGIHKWISDY (101 aa). Phosphoserine is present on Ser99.

Belongs to the RRP7 family. In terms of assembly, part of the small subunit (SSU) processome, composed of more than 70 proteins and the RNA chaperone small nucleolar RNA (snoRNA) U3. Interacts with NOL6; required for NOL6 localization to nucleolus.

It localises to the nucleus. Its subcellular location is the nucleolus. It is found in the cell projection. The protein localises to the cilium. The protein resides in the cytoplasm. It localises to the cytoskeleton. Its subcellular location is the microtubule organizing center. It is found in the centrosome. Functionally, nucleolar protein that is involved in ribosomal RNA (rRNA) processing. Also plays a role in primary cilia resorption, and cell cycle progression in neurogenesis and neocortex development. Part of the small subunit (SSU) processome, first precursor of the small eukaryotic ribosomal subunit. During the assembly of the SSU processome in the nucleolus, many ribosome biogenesis factors, an RNA chaperone and ribosomal proteins associate with the nascent pre-rRNA and work in concert to generate RNA folding, modifications, rearrangements and cleavage as well as targeted degradation of pre-ribosomal RNA by the RNA exosome. In Pongo abelii (Sumatran orangutan), this protein is Ribosomal RNA-processing protein 7 homolog A (RRP7A).